A 122-amino-acid polypeptide reads, in one-letter code: MIQVQTILNSADNTGAKKLMCIRVLGGSNRRYASLGDIIVCSVKEATPDAVVKKGEVVKAVVVRTKKEVRRPDGTYIKFDENAAVIIKDDKSPRGTRIFGPVARELREKDFMKIISLAPEVL.

It belongs to the universal ribosomal protein uL14 family. Part of the 50S ribosomal subunit. Forms a cluster with proteins L3 and L19. In the 70S ribosome, L14 and L19 interact and together make contacts with the 16S rRNA in bridges B5 and B8.

In terms of biological role, binds to 23S rRNA. Forms part of two intersubunit bridges in the 70S ribosome. In Carboxydothermus hydrogenoformans (strain ATCC BAA-161 / DSM 6008 / Z-2901), this protein is Large ribosomal subunit protein uL14.